The sequence spans 994 residues: Sarcoplasmic/endoplasmic reticulum calcium ATPase 1 (994 aa).

The Cytoplasmic segment spans residues 1–48 (MEAAHSKSTEECLSYFGVSETTGLTPDQVKRHLEKYGPNELPAEEGKS). A helical transmembrane segment spans residues 49 to 69 (LWELVVEQFEDLLVRILLLAA). Residues 70 to 89 (CISFVLAWFEEGEETVTAFV) are Lumenal-facing. A helical transmembrane segment spans residues 90–110 (EPFVILLILIANAIVGVWQER). Over 111–253 (NAENAIEALK…QDKTPLQQKL (143 aa)) the chain is Cytoplasmic. A helical membrane pass occupies residues 254–273 (DEFGEQLSKVISLICVAVWL). The Lumenal segment spans residues 274–295 (INIGHFNDPVHGGSWFRGAIYY). A helical transmembrane segment spans residues 296 to 313 (FKIAVALAVAAIPEGLPA). Val-304, Ala-305, Ile-307, and Glu-309 together coordinate Ca(2+). The Cytoplasmic segment spans residues 314–757 (VITTCLALGT…EEGRAIYNNM (444 aa)). The active-site 4-aspartylphosphate intermediate is Asp-351. Mg(2+)-binding residues include Asp-351 and Thr-353. Thr-353 provides a ligand contact to ATP. Thr-441 is modified (phosphothreonine). Residues Glu-442, Arg-489, Lys-515, and Arg-560 each contribute to the ATP site. Thr-569 is modified (phosphothreonine). A Phosphoserine modification is found at Ser-581. Positions 625, 626, and 627 each coordinate ATP. At Ser-643 the chain carries Phosphoserine. Positions 678 and 684 each coordinate ATP. Mg(2+) is bound at residue Asp-703. Asn-706 contacts ATP. A helical transmembrane segment spans residues 758 to 777 (KQFIRYLISSNVGEVVCIFL). Ca(2+) contacts are provided by Asn-768 and Glu-771. Over 778–787 (TAALGLPEAL) the chain is Lumenal. Residues 788 to 808 (IPVQLLWVNLVTDGLPATALG) form a helical membrane-spanning segment. Residues 788–808 (IPVQLLWVNLVTDGLPATALG) are interaction with PLN. Residues Asn-796, Thr-799, and Asp-800 each coordinate Ca(2+). The Cytoplasmic segment spans residues 809–828 (FNPPDLDIMDRPPRSPKEPL). A helical transmembrane segment spans residues 829 to 851 (ISGWLFFRYMAIGGYVGAATVGA). At 852-897 (AAWWFLYAEDGPHVSYHQLTHFMQCTEHNPEFDGLDCEVFEAPEPM) the chain is on the lumenal side. Cys-876 and Cys-888 are oxidised to a cystine. A helical transmembrane segment spans residues 898–917 (TMALSVLVTIEMCNALNSLS). A Ca(2+)-binding site is contributed by Glu-908. Topologically, residues 918–930 (ENQSLLRMPPWVN) are cytoplasmic. A helical transmembrane segment spans residues 931–949 (IWLLGSICLSMSLHFLILY). Residues 932–943 (WLLGSICLSMSL) are interaction with PLN. The Lumenal portion of the chain corresponds to 950 to 964 (VDPLPMIFKLRALDF). A helical membrane pass occupies residues 965–985 (TQWLMVLKISLPVIGLDELLK). Residues 986 to 994 (FIARNYLEG) are Cytoplasmic-facing.

It belongs to the cation transport ATPase (P-type) (TC 3.A.3) family. Type IIA subfamily. As to quaternary structure, interacts with sarcolipin (SLN). Interacts with phospholamban (PLN). Interacts with myoregulin (MRLN). Interacts with DWORF. Interacts with VMP1. Requires Mg(2+) as cofactor.

It localises to the endoplasmic reticulum membrane. Its subcellular location is the sarcoplasmic reticulum membrane. The enzyme catalyses Ca(2+)(in) + ATP + H2O = Ca(2+)(out) + ADP + phosphate + H(+). Its activity is regulated as follows. Inhibited by sarcolipin (SLN) and myoregulin (MRLN). Has also been shown to be reversibly inhibited by phospholamban (PLN) at low calcium concentrations in vitro. Dephosphorylated PLN decreases the apparent affinity of the ATPase for calcium in vitro and this inhibition is regulated by the phosphorylation of PLN. Enhanced by DWORF; DWORF increases activity by displacing sarcolipin (SLN), phospholamban (PLN) and myoregulin (MRLN). In terms of biological role, key regulator of striated muscle performance by acting as the major Ca(2+) ATPase responsible for the reuptake of cytosolic Ca(2+) into the sarcoplasmic reticulum. Catalyzes the hydrolysis of ATP coupled with the translocation of calcium from the cytosol to the sarcoplasmic reticulum lumen. Contributes to calcium sequestration involved in muscular excitation/contraction. This is Sarcoplasmic/endoplasmic reticulum calcium ATPase 1 (Atp2a1) from Mus musculus (Mouse).